The chain runs to 278 residues: Transmembrane protein 41B (278 aa).

The tract at residues 1–31 (MQVHERSHTGGHTFQCNHGNEKKAPAAGKVH) is disordered. The next 6 helical transmembrane spans lie at 39 to 59 (MSLL…FLVY), 96 to 116 (FYVE…TFAI), 142 to 162 (CSGL…RPVV), 184 to 204 (LINY…FINI), 212 to 232 (PLKV…FVAI), and 249 to 269 (SWNS…PAIF). The VTT domain; required for its function in autophagy stretch occupies residues 127 to 238 (GFLYPFPLAL…FVAIKAGTTL (112 aa)).

This sequence belongs to the TMEM41 family.

Its subcellular location is the endoplasmic reticulum membrane. It localises to the endomembrane system. The catalysed reaction is a 1,2-diacyl-sn-glycero-3-phospho-L-serine(in) = a 1,2-diacyl-sn-glycero-3-phospho-L-serine(out). It catalyses the reaction cholesterol(in) = cholesterol(out). The enzyme catalyses a 1,2-diacyl-sn-glycero-3-phosphocholine(in) = a 1,2-diacyl-sn-glycero-3-phosphocholine(out). It carries out the reaction a 1,2-diacyl-sn-glycero-3-phosphoethanolamine(in) = a 1,2-diacyl-sn-glycero-3-phosphoethanolamine(out). Functionally, phospholipid scramblase involved in lipid homeostasis and membrane dynamics processes. Has phospholipid scramblase activity toward cholesterol and phosphatidylserine, as well as phosphatidylethanolamine and phosphatidylcholine. Required for autophagosome formation: participates in early stages of autophagosome biogenesis at the endoplasmic reticulum (ER) membrane by reequilibrating the leaflets of the ER as lipids are extracted by atg2 (atg2a or atg2b) to mediate autophagosome assembly. In addition to autophagy, involved in other processes in which phospholipid scramblase activity is required. Required for normal motor neuron development. The chain is Transmembrane protein 41B from Xenopus laevis (African clawed frog).